We begin with the raw amino-acid sequence, 163 residues long: Phosphopantetheine adenylyltransferase (163 aa).

A substrate-binding site is contributed by threonine 9. ATP contacts are provided by residues 9–10 (TF) and histidine 17. Substrate-binding residues include lysine 41, threonine 73, and arginine 87. ATP contacts are provided by residues 88–90 (GLR), glutamate 98, and 123–129 (FSFISSS).

Belongs to the bacterial CoaD family. In terms of assembly, homohexamer. Mg(2+) serves as cofactor.

The protein localises to the cytoplasm. It catalyses the reaction (R)-4'-phosphopantetheine + ATP + H(+) = 3'-dephospho-CoA + diphosphate. It participates in cofactor biosynthesis; coenzyme A biosynthesis; CoA from (R)-pantothenate: step 4/5. In terms of biological role, reversibly transfers an adenylyl group from ATP to 4'-phosphopantetheine, yielding dephospho-CoA (dPCoA) and pyrophosphate. The protein is Phosphopantetheine adenylyltransferase of Desulfitobacterium hafniense (strain Y51).